Reading from the N-terminus, the 271-residue chain is Troponin T, fast skeletal muscle (271 aa).

The span at 1 to 21 (MSDEEVEHVEEEYEEEEEAQE) shows a compositional bias: acidic residues. Residues 1 to 74 (MSDEEVEHVE…EKVDFDDIQK (74 aa)) form a disordered region. At serine 2 the chain carries N-acetylserine. Serine 2 bears the Phosphoserine mark. 2 stretches are compositionally biased toward basic and acidic residues: residues 31–53 (PEVH…EKPR) and 62–74 (PEGE…DIQK). Phosphoserine is present on serine 90. Basic and acidic residues predominate over residues 113–155 (RAERAEQQRIRAEKERERQNRLAEEKARREEEDAKRRAEDDLK). The disordered stretch occupies residues 113-194 (RAERAEQQRI…REMKKKVLAE (82 aa)). Phosphoserine occurs at positions 161, 168, and 169. Basic and acidic residues predominate over residues 183–194 (TAREMKKKVLAE). At serine 205 the chain carries Phosphoserine. Phosphotyrosine is present on tyrosine 221. The disordered stretch occupies residues 248 to 271 (IDQAQKHSKKAGTAPKGKVGGRWK).

It belongs to the troponin T family.

Its function is as follows. Troponin T is the tropomyosin-binding subunit of troponin, the thin filament regulatory complex which confers calcium-sensitivity to striated muscle actomyosin ATPase activity. In Bos taurus (Bovine), this protein is Troponin T, fast skeletal muscle (Tnnt3).